Consider the following 622-residue polypeptide: 1-deoxy-D-xylulose-5-phosphate synthase (622 aa).

Residues histidine 80 and 121 to 123 contribute to the thiamine diphosphate site; that span reads GHS. Position 152 (aspartate 152) interacts with Mg(2+). Residues 153–154, asparagine 181, tyrosine 288, and glutamate 370 each bind thiamine diphosphate; that span reads GA. A Mg(2+)-binding site is contributed by asparagine 181.

This sequence belongs to the transketolase family. DXPS subfamily. In terms of assembly, homodimer. It depends on Mg(2+) as a cofactor. The cofactor is thiamine diphosphate.

The catalysed reaction is D-glyceraldehyde 3-phosphate + pyruvate + H(+) = 1-deoxy-D-xylulose 5-phosphate + CO2. It participates in metabolic intermediate biosynthesis; 1-deoxy-D-xylulose 5-phosphate biosynthesis; 1-deoxy-D-xylulose 5-phosphate from D-glyceraldehyde 3-phosphate and pyruvate: step 1/1. Its function is as follows. Catalyzes the acyloin condensation reaction between C atoms 2 and 3 of pyruvate and glyceraldehyde 3-phosphate to yield 1-deoxy-D-xylulose-5-phosphate (DXP). In Shewanella denitrificans (strain OS217 / ATCC BAA-1090 / DSM 15013), this protein is 1-deoxy-D-xylulose-5-phosphate synthase.